The primary structure comprises 147 residues: Large ribosomal subunit protein uL13 (147 aa).

This sequence belongs to the universal ribosomal protein uL13 family. In terms of assembly, part of the 50S ribosomal subunit.

In terms of biological role, this protein is one of the early assembly proteins of the 50S ribosomal subunit, although it is not seen to bind rRNA by itself. It is important during the early stages of 50S assembly. In Renibacterium salmoninarum (strain ATCC 33209 / DSM 20767 / JCM 11484 / NBRC 15589 / NCIMB 2235), this protein is Large ribosomal subunit protein uL13.